The primary structure comprises 1107 residues: Unconventional myosin-Ie (1107 aa).

The region spanning Ser19–Glu692 is the Myosin motor domain. Residue Gly112–Thr119 coordinates ATP. The actin-binding stretch occupies residues Pro581 to Glu591. The IQ domain occupies Tyr695 to Asp724. Positions Lys730–Pro922 constitute a TH1 domain. The tract at residues Ile920–Val1052 is disordered. Composition is skewed to polar residues over residues Arg933–Tyr949, Ser977–Thr989, and Arg998–Glu1012. Ser1001 is modified (phosphoserine). The span at Arg1034–Gln1051 shows a compositional bias: pro residues. Positions Pro1050–Ile1107 constitute an SH3 domain.

This sequence belongs to the TRAFAC class myosin-kinesin ATPase superfamily. Myosin family. In terms of assembly, interacts with CALM and F-actin. Interacts (via SH3 domain) with SYNJ1, DNM1 and DNM2. Interacts with ARL14EP. Interacts with CARMIL1. In terms of tissue distribution, detected in brain stem, brain cortex, cerebellum, stomach, colon, heart, lung, liver, spleen and kidney. Detected in utricle, cochlea, outer hair cell bundle cuticular plate and vestibular epithelia (at protein level). Detected in cochlea and vestibular tissues. Detected in kidney, lung, spleen and intestine.

The protein resides in the cytoplasm. The protein localises to the cytoskeleton. It localises to the cytoplasmic vesicle. It is found in the clathrin-coated vesicle. Its subcellular location is the cell junction. Myosins are actin-based motor molecules with ATPase activity. Unconventional myosins serve in intracellular movements. Their highly divergent tails bind to membranous compartments, which are then moved relative to actin filaments. Binds to membranes containing anionic phospholipids via its tail domain. Involved in clathrin-mediated endocytosis and intracellular movement of clathrin-coated vesicles. Required for normal morphology of the glomerular basement membrane, normal development of foot processes by kidney podocytes and normal kidney function. In dendritic cells, may control the movement of class II-containing cytoplasmic vesicles along the actin cytoskeleton by connecting them with the actin network via ARL14EP and ARL14. This chain is Unconventional myosin-Ie (Myo1e), found in Rattus norvegicus (Rat).